Here is a 164-residue protein sequence, read N- to C-terminus: ATP synthase subunit b (164 aa).

Residues 12 to 32 (FILVTGSVIVLLLLIKAFAWG) traverse the membrane as a helical segment.

It belongs to the ATPase B chain family. As to quaternary structure, F-type ATPases have 2 components, F(1) - the catalytic core - and F(0) - the membrane proton channel. F(1) has five subunits: alpha(3), beta(3), gamma(1), delta(1), epsilon(1). F(0) has three main subunits: a(1), b(2) and c(10-14). The alpha and beta chains form an alternating ring which encloses part of the gamma chain. F(1) is attached to F(0) by a central stalk formed by the gamma and epsilon chains, while a peripheral stalk is formed by the delta and b chains.

The protein resides in the cell membrane. F(1)F(0) ATP synthase produces ATP from ADP in the presence of a proton or sodium gradient. F-type ATPases consist of two structural domains, F(1) containing the extramembraneous catalytic core and F(0) containing the membrane proton channel, linked together by a central stalk and a peripheral stalk. During catalysis, ATP synthesis in the catalytic domain of F(1) is coupled via a rotary mechanism of the central stalk subunits to proton translocation. Its function is as follows. Component of the F(0) channel, it forms part of the peripheral stalk, linking F(1) to F(0). The sequence is that of ATP synthase subunit b from Streptococcus equi subsp. zooepidemicus (strain MGCS10565).